Here is a 329-residue protein sequence, read N- to C-terminus: Quinate dehydrogenase (329 aa).

It catalyses the reaction L-quinate + NAD(+) = 3-dehydroquinate + NADH + H(+). It functions in the pathway aromatic compound metabolism; 3,4-dihydroxybenzoate biosynthesis; 3-dehydroquinate from D-quinate (NAD(+) route): step 1/1. The chain is Quinate dehydrogenase (qutB) from Emericella nidulans (strain FGSC A4 / ATCC 38163 / CBS 112.46 / NRRL 194 / M139) (Aspergillus nidulans).